A 95-amino-acid chain; its full sequence is Feather keratin B-4 (95 aa).

N-acetylserine is present on S1.

This sequence belongs to the avian keratin family. As to quaternary structure, the avian keratins (F-ker, S-ker, C-ker and B-ker) are a complex mixture of very similar polypeptides.

This Anas platyrhynchos (Mallard) protein is Feather keratin B-4.